A 394-amino-acid chain; its full sequence is Elongation factor Tu (394 aa).

Residues 10 to 204 (KPHVNIGTIG…AVDSYIPQPI (195 aa)) form the tr-type G domain. Positions 19–26 (GHVDHGKT) are G1. 19–26 (GHVDHGKT) provides a ligand contact to GTP. Thr26 is a Mg(2+) binding site. The segment at 60 to 64 (GITIS) is G2. The segment at 81 to 84 (DCPG) is G3. Residues 81–85 (DCPGH) and 136–139 (NKVD) contribute to the GTP site. Residues 136–139 (NKVD) are G4. Residues 174–176 (SAL) are G5.

This sequence belongs to the TRAFAC class translation factor GTPase superfamily. Classic translation factor GTPase family. EF-Tu/EF-1A subfamily. As to quaternary structure, monomer.

It localises to the cytoplasm. The enzyme catalyses GTP + H2O = GDP + phosphate + H(+). In terms of biological role, GTP hydrolase that promotes the GTP-dependent binding of aminoacyl-tRNA to the A-site of ribosomes during protein biosynthesis. This Rickettsia typhi (strain ATCC VR-144 / Wilmington) protein is Elongation factor Tu.